A 175-amino-acid polypeptide reads, in one-letter code: NADH-ubiquinone oxidoreductase chain 6 (175 aa).

A run of 5 helical transmembrane segments spans residues 1-21 (MMLYIVFILSVIFVMGFVGFS), 25-45 (SPIYGGLGLIVSGGVGCGIVL), 47-67 (FGGSFLGLMVFLIYLGGMMVV), 88-108 (AVLGAFVTGLLMEFFMVYYVL), and 149-169 (YGTWLVIVTGWSLLIGVVVIM).

Belongs to the complex I subunit 6 family. Core subunit of respiratory chain NADH dehydrogenase (Complex I) which is composed of 45 different subunits.

The protein resides in the mitochondrion inner membrane. The catalysed reaction is a ubiquinone + NADH + 5 H(+)(in) = a ubiquinol + NAD(+) + 4 H(+)(out). Core subunit of the mitochondrial membrane respiratory chain NADH dehydrogenase (Complex I) which catalyzes electron transfer from NADH through the respiratory chain, using ubiquinone as an electron acceptor. Essential for the catalytic activity and assembly of complex I. The polypeptide is NADH-ubiquinone oxidoreductase chain 6 (MT-ND6) (Bos indicus (Zebu)).